The primary structure comprises 92 residues: Bombyxin A-4 (92 aa).

The first 19 residues, 1–19 (MKILLAIALMLSTVMWVST), serve as a signal peptide directing secretion. Glutamine 20 carries the pyrrolidone carboxylic acid modification. 3 disulfides stabilise this stretch: cysteine 29-cysteine 79, cysteine 41-cysteine 92, and cysteine 78-cysteine 83. Residues 50–70 (SGAQFASYGSAWLMPYSEGRG) constitute a propeptide, c peptide like.

This sequence belongs to the insulin family. In terms of assembly, heterodimer of a B chain and an A chain linked by two disulfide bonds.

It localises to the secreted. Brain peptide responsible for activation of prothoracic glands to produce ecdysone in insects. The polypeptide is Bombyxin A-4 (BBXA4) (Bombyx mori (Silk moth)).